Reading from the N-terminus, the 367-residue chain is 4-hydroxy-3-methylbut-2-en-1-yl diphosphate synthase (flavodoxin) (367 aa).

4 residues coordinate [4Fe-4S] cluster: cysteine 268, cysteine 271, cysteine 303, and glutamate 310.

This sequence belongs to the IspG family. The cofactor is [4Fe-4S] cluster.

It carries out the reaction (2E)-4-hydroxy-3-methylbut-2-enyl diphosphate + oxidized [flavodoxin] + H2O + 2 H(+) = 2-C-methyl-D-erythritol 2,4-cyclic diphosphate + reduced [flavodoxin]. It functions in the pathway isoprenoid biosynthesis; isopentenyl diphosphate biosynthesis via DXP pathway; isopentenyl diphosphate from 1-deoxy-D-xylulose 5-phosphate: step 5/6. Its function is as follows. Converts 2C-methyl-D-erythritol 2,4-cyclodiphosphate (ME-2,4cPP) into 1-hydroxy-2-methyl-2-(E)-butenyl 4-diphosphate. This chain is 4-hydroxy-3-methylbut-2-en-1-yl diphosphate synthase (flavodoxin), found in Halalkalibacterium halodurans (strain ATCC BAA-125 / DSM 18197 / FERM 7344 / JCM 9153 / C-125) (Bacillus halodurans).